The chain runs to 229 residues: Ribonuclease T (229 aa).

Residues 23–197 enclose the Exonuclease domain; sequence VIIDVETAGF…YDTERTAELF (175 aa). The Mg(2+) site is built by D26, E28, H184, and D189. H184 (proton donor/acceptor) is an active-site residue.

It belongs to the RNase T family. In terms of assembly, homodimer. Mg(2+) is required as a cofactor.

Its function is as follows. Trims short 3' overhangs of a variety of RNA species, leaving a one or two nucleotide 3' overhang. Responsible for the end-turnover of tRNA: specifically removes the terminal AMP residue from uncharged tRNA (tRNA-C-C-A). Also appears to be involved in tRNA biosynthesis. This chain is Ribonuclease T, found in Haemophilus influenzae (strain PittEE).